The primary structure comprises 1905 residues: Low-density lipoprotein receptor-related protein 4 (1905 aa).

Positions 1-20 (MRRQWGALLLGALLCAHGLA) are cleaved as a signal peptide. Residues 21–1725 (SSPECACGRS…AAPGEGLHIS (1705 aa)) are Extracellular-facing. LDL-receptor class A domains follow at residues 26-67 (ACGR…DGCI), 70-106 (TCSP…QDCP), 109-144 (ECEE…EQCD), 147-183 (KCSD…ENCP), 190-226 (PCNL…SDCS), 230-266 (PCRS…RNCT), 269-305 (MCTA…ENCE), and 311-350 (QCAL…QNCR). Cystine bridges form between cysteine 27-cysteine 44, cysteine 34-cysteine 57, cysteine 51-cysteine 66, cysteine 71-cysteine 83, cysteine 78-cysteine 96, cysteine 90-cysteine 105, cysteine 110-cysteine 122, cysteine 117-cysteine 135, cysteine 129-cysteine 143, cysteine 148-cysteine 160, cysteine 155-cysteine 173, cysteine 167-cysteine 182, cysteine 191-cysteine 203, cysteine 198-cysteine 216, cysteine 210-cysteine 225, cysteine 231-cysteine 243, cysteine 238-cysteine 256, cysteine 250-cysteine 265, cysteine 270-cysteine 282, cysteine 277-cysteine 295, cysteine 289-cysteine 304, cysteine 312-cysteine 324, cysteine 319-cysteine 337, cysteine 331-cysteine 349, cysteine 358-cysteine 369, cysteine 365-cysteine 378, cysteine 380-cysteine 393, cysteine 399-cysteine 409, cysteine 405-cysteine 418, and cysteine 420-cysteine 433. N-linked (GlcNAc...) asparagine glycosylation occurs at asparagine 264. An EGF-like 1; calcium-binding domain is found at 354–394 (GEENCNVNNGGCAQKCQMVRGAVQCTCHTGYRLTEDGHTCQ). Residues 395 to 434 (DVNECAEEGYCSQGCTNSEGAFQCWCETGYELRPDRRSCK) form the EGF-like 2; calcium-binding domain. 5 LDL-receptor class B repeats span residues 480 to 522 (ELVF…DWVH), 523 to 565 (DKLY…HPME), 566 to 609 (GTIY…DYAG), 610 to 652 (RRMY…FEDS), and 653 to 693 (LYWT…LHPQ). N-linked (GlcNAc...) asparagine glycosylation occurs at asparagine 498. The EGF-like 3 domain maps to 698 to 737 (GKNRCGDNNGGCTHLCLPSGQNYTCACPTGFRKISSHACA). 3 disulfides stabilise this stretch: cysteine 702-cysteine 713, cysteine 709-cysteine 722, and cysteine 724-cysteine 736. The N-linked (GlcNAc...) asparagine glycan is linked to asparagine 719. 5 LDL-receptor class B repeats span residues 785 to 827 (DHVY…DWVT), 828 to 870 (NKLY…EPMG), 871 to 914 (GYMY…DYGS), 915 to 956 (QRLY…LYGE), and 957 to 998 (RIYW…FHRR). Residue asparagine 901 is glycosylated (N-linked (GlcNAc...) asparagine). An N-linked (GlcNAc...) asparagine glycan is attached at asparagine 1077. 10 LDL-receptor class B repeats span residues 1093 to 1135 (GKVY…DAIG), 1136 to 1178 (RKVY…YHEM), 1179 to 1222 (GFMY…DKAS), 1223 to 1263 (SQLL…LLDS), 1264 to 1306 (YIYW…DRAQ), 1397 to 1439 (GKVY…DWVA), 1440 to 1482 (RNLY…FPRK), 1483 to 1526 (GYLF…DYDT), 1527 to 1568 (RRIY…QDRW), and 1569 to 1610 (IYWT…SPQR). Asparagine 1415 and asparagine 1467 each carry an N-linked (GlcNAc...) asparagine glycan. The segment at 1659–1686 (PRATGMSEKSPVLPNTPPTTLYSSTTRT) is disordered. A compositionally biased stretch (low complexity) spans 1676–1686 (PTTLYSSTTRT). A helical transmembrane segment spans residues 1726–1746 (YAIGGLLSILLILVVIAALML). Residues 1747–1905 (YRHKKSKFTD…ERKLSSESQV (159 aa)) lie on the Cytoplasmic side of the membrane. Residues 1766–1769 (NPSY) carry the Endocytosis signal motif. The segment at 1852 to 1905 (ASSGSLDDTETEQLLQEEQSECSSVHTAATPERRGSLPDTGWKHERKLSSESQV) is disordered. A compositionally biased stretch (basic and acidic residues) spans 1882-1905 (PERRGSLPDTGWKHERKLSSESQV).

This sequence belongs to the LDLR family. In terms of assembly, homooligomer. Interacts with MUSK; the heterodimer forms an AGRIN receptor complex that binds AGRIN resulting in activation of MUSK. Interacts (via the extracellular domain) with SOST; the interaction facilitates the inhibition of Wnt signaling. Interacts with MESD; the interaction promotes glycosylation of LRP4 and its cell-surface expression. In terms of tissue distribution, expressed in bone; present in osteoblasts and osteocytes. No expression is observed in osteoclast. Expressed in several regions of the brain.

The protein resides in the cell membrane. Functionally, mediates SOST-dependent inhibition of bone formation. Functions as a specific facilitator of SOST-mediated inhibition of Wnt signaling. Plays a key role in the formation and the maintenance of the neuromuscular junction (NMJ), the synapse between motor neuron and skeletal muscle. Directly binds AGRIN and recruits it to the MUSK signaling complex. Mediates the AGRIN-induced phosphorylation of MUSK, the kinase of the complex. The activation of MUSK in myotubes induces the formation of NMJ by regulating different processes including the transcription of specific genes and the clustering of AChR in the postsynaptic membrane. Alternatively, may be involved in the negative regulation of the canonical Wnt signaling pathway, being able to antagonize the LRP6-mediated activation of this pathway. More generally, has been proposed to function as a cell surface endocytic receptor binding and internalizing extracellular ligands for degradation by lysosomes. May play an essential role in the process of digit differentiation. The chain is Low-density lipoprotein receptor-related protein 4 (LRP4) from Homo sapiens (Human).